The primary structure comprises 128 residues: Sulfurtransferase TusD (128 aa).

The Cysteine persulfide intermediate role is filled by cysteine 78.

The protein belongs to the DsrE/TusD family. Heterohexamer, formed by a dimer of trimers. The hexameric TusBCD complex contains 2 copies each of TusB, TusC and TusD. The TusBCD complex interacts with TusE.

It localises to the cytoplasm. In terms of biological role, part of a sulfur-relay system required for 2-thiolation of 5-methylaminomethyl-2-thiouridine (mnm(5)s(2)U) at tRNA wobble positions. Accepts sulfur from TusA and transfers it in turn to TusE. The protein is Sulfurtransferase TusD of Klebsiella pneumoniae subsp. pneumoniae (strain ATCC 700721 / MGH 78578).